The primary structure comprises 107 residues: Nucleoid-associated protein Msil_0275 (107 aa).

The protein belongs to the YbaB/EbfC family. In terms of assembly, homodimer.

The protein resides in the cytoplasm. Its subcellular location is the nucleoid. Functionally, binds to DNA and alters its conformation. May be involved in regulation of gene expression, nucleoid organization and DNA protection. The polypeptide is Nucleoid-associated protein Msil_0275 (Methylocella silvestris (strain DSM 15510 / CIP 108128 / LMG 27833 / NCIMB 13906 / BL2)).